The primary structure comprises 100 residues: MAPPTCRLLSAALVLLLLLATNHQATGAVVASELRCQCLKTLPRVDFKNIQSLSVTPPGPHCAQTEVIATLKGGQKVCLDPEAPLVQKIIQKILNKGKAN.

Positions methionine 1–glycine 27 are cleaved as a signal peptide. Cystine bridges form between cysteine 36–cysteine 62 and cysteine 38–cysteine 78.

The protein belongs to the intercrine alpha (chemokine CxC) family. Homotetramer.

The protein localises to the secreted. Functionally, chemotactic for human polymorphonuclear leukocytes but does not induce chemokinesis or an oxidative burst. The sequence is that of C-X-C motif chemokine 2 (Cxcl2) from Mus musculus (Mouse).